Reading from the N-terminus, the 268-residue chain is Photosystem II 22 kDa protein 1, chloroplastic (268 aa).

The transit peptide at 1–60 (MAQSMLVSGANGTVAAASTSRLQPVRPTPFSRLVLSQPSSSLGRAVSVKTVALFGRSKTK) directs the protein to the chloroplast. A run of 2 repeats spans residues 54-161 (FGRS…FVDD) and 164-268 (VTGL…DDEE). 4 helical membrane-spanning segments follow: residues 99–119 (VAMLGFAASILGEAITGKGIL), 133–153 (AEPLLLFFILFTLLGAIGALG), 199–219 (LFVGRLAQLGIAFSIIGEIIT), and 234–254 (PINEIEPLVLFNVVFFFIAAI).

This sequence belongs to the ELIP/psbS family. Expressed at low levels in leaves (at protein level).

It is found in the plastid. Its subcellular location is the chloroplast thylakoid membrane. Functionally, involved in high light-mediated energy-dependent nonphotochemical quenching (NPQ, qE) and thermal dissipation (TD) thus regulating energy conversion in photosystem II and protecting from photoinhibition. Also seems to regulate quantum yield of electron transport in fluctuating light conditions. The chain is Photosystem II 22 kDa protein 1, chloroplastic from Oryza sativa subsp. indica (Rice).